Reading from the N-terminus, the 343-residue chain is Phenylalanine--tRNA ligase alpha subunit (343 aa).

Glu268 provides a ligand contact to Mg(2+).

The protein belongs to the class-II aminoacyl-tRNA synthetase family. Phe-tRNA synthetase alpha subunit type 1 subfamily. As to quaternary structure, tetramer of two alpha and two beta subunits. It depends on Mg(2+) as a cofactor.

The protein localises to the cytoplasm. It carries out the reaction tRNA(Phe) + L-phenylalanine + ATP = L-phenylalanyl-tRNA(Phe) + AMP + diphosphate + H(+). The protein is Phenylalanine--tRNA ligase alpha subunit of Cupriavidus taiwanensis (strain DSM 17343 / BCRC 17206 / CCUG 44338 / CIP 107171 / LMG 19424 / R1) (Ralstonia taiwanensis (strain LMG 19424)).